A 166-amino-acid polypeptide reads, in one-letter code: CDP-archaeol synthase (166 aa).

The next 4 helical transmembrane spans lie at 42 to 62 (LVLGILSGVLLGLIQVSVQDA), 73 to 93 (VLSVLLLAVGALAGDMVKSFV), 103 to 123 (AAWPLADQYDLVAGSLLLLLI), and 128 to 148 (FAAVNLTIPVIFWILVLTPLL).

Belongs to the CDP-archaeol synthase family. It depends on Mg(2+) as a cofactor.

It is found in the cell membrane. The enzyme catalyses 2,3-bis-O-(geranylgeranyl)-sn-glycerol 1-phosphate + CTP + H(+) = CDP-2,3-bis-O-(geranylgeranyl)-sn-glycerol + diphosphate. The protein operates within membrane lipid metabolism; glycerophospholipid metabolism. In terms of biological role, catalyzes the formation of CDP-2,3-bis-(O-geranylgeranyl)-sn-glycerol (CDP-archaeol) from 2,3-bis-(O-geranylgeranyl)-sn-glycerol 1-phosphate (DGGGP) and CTP. This reaction is the third ether-bond-formation step in the biosynthesis of archaeal membrane lipids. In Methanosphaerula palustris (strain ATCC BAA-1556 / DSM 19958 / E1-9c), this protein is CDP-archaeol synthase.